Consider the following 380-residue polypeptide: Beta-1,3-N-acetylglucosaminyltransferase lunatic fringe (380 aa).

The Cytoplasmic segment spans residues 1–8 (MLKRCGRR). The chain crosses the membrane as a helical; Signal-anchor for type II membrane protein span at residues 9–29 (LLLALAGALLACLLVLTADPP). At 30–380 (PPPVPAERGR…TSWCPRSAIF (351 aa)) the chain is on the lumenal side. The interval 85–110 (SRRDVGPPPGGAPRPADGPPRPLAEP) is disordered. Pro residues predominate over residues 90-107 (GPPPGGAPRPADGPPRPL). R130 contacts substrate. N168 carries an N-linked (GlcNAc...) asparagine glycan. Disulfide bonds link C169-C180 and C198-C261. Residue D202 coordinates substrate. Mn(2+) is bound at residue D203. Residue D291 is part of the active site. Position 315 (H315) interacts with Mn(2+). An intrachain disulfide couples C365 to C374.

It belongs to the glycosyltransferase 31 family. Mn(2+) is required as a cofactor. It depends on Co(2+) as a cofactor. In terms of processing, a soluble form may be derived from the membrane form by proteolytic processing.

It is found in the golgi apparatus. The protein localises to the golgi apparatus membrane. It catalyses the reaction 3-O-(alpha-L-fucosyl)-L-threonyl-[EGF-like domain protein] + UDP-N-acetyl-alpha-D-glucosamine = 3-O-(N-acetyl-beta-D-glucosaminyl-(1-&gt;3)-alpha-L-fucosyl)-L-threonyl-[EGF-like domain protein] + UDP + H(+). It carries out the reaction 3-O-(alpha-L-fucosyl)-L-seryl-[EGF-like domain protein] + UDP-N-acetyl-alpha-D-glucosamine = 3-O-(N-acetyl-beta-D-glucosaminyl-(1-&gt;3)-alpha-L-fucosyl)-L-seryl-[EGF-like domain protein] + UDP + H(+). Functionally, glycosyltransferase that initiates the elongation of O-linked fucose residues attached to EGF-like repeats in the extracellular domain of Notch molecules. Modulates NOTCH1 activity by modifying O-fucose residues at specific EGF-like domains resulting in inhibition of NOTCH1 activation by JAG1 and enhancement of NOTCH1 activation by DLL1 via an increase in its binding to DLL1. Decreases the binding of JAG1 to NOTCH2 but not that of DLL1. Essential mediator of somite segmentation and patterning. This Bos taurus (Bovine) protein is Beta-1,3-N-acetylglucosaminyltransferase lunatic fringe (LFNG).